The chain runs to 331 residues: Ketol-acid reductoisomerase (NADP(+)) (331 aa).

A KARI N-terminal Rossmann domain is found at 1–181 (MKVYYEKDAN…GGSRSGVIET (181 aa)). Residues 24–27 (YGSQ), R47, and 82–85 (DQVQ) contribute to the NADP(+) site. Residue H107 is part of the active site. Residue G133 coordinates NADP(+). In terms of domain architecture, KARI C-terminal knotted spans 182-327 (TFREETETDL…GELRGMMPWL (146 aa)). Residues D190, E194, E226, and E230 each contribute to the Mg(2+) site. S251 lines the substrate pocket.

It belongs to the ketol-acid reductoisomerase family. Requires Mg(2+) as cofactor.

It catalyses the reaction (2R)-2,3-dihydroxy-3-methylbutanoate + NADP(+) = (2S)-2-acetolactate + NADPH + H(+). The catalysed reaction is (2R,3R)-2,3-dihydroxy-3-methylpentanoate + NADP(+) = (S)-2-ethyl-2-hydroxy-3-oxobutanoate + NADPH + H(+). It participates in amino-acid biosynthesis; L-isoleucine biosynthesis; L-isoleucine from 2-oxobutanoate: step 2/4. Its pathway is amino-acid biosynthesis; L-valine biosynthesis; L-valine from pyruvate: step 2/4. In terms of biological role, involved in the biosynthesis of branched-chain amino acids (BCAA). Catalyzes an alkyl-migration followed by a ketol-acid reduction of (S)-2-acetolactate (S2AL) to yield (R)-2,3-dihydroxy-isovalerate. In the isomerase reaction, S2AL is rearranged via a Mg-dependent methyl migration to produce 3-hydroxy-3-methyl-2-ketobutyrate (HMKB). In the reductase reaction, this 2-ketoacid undergoes a metal-dependent reduction by NADPH to yield (R)-2,3-dihydroxy-isovalerate. In Nitratidesulfovibrio vulgaris (strain ATCC 29579 / DSM 644 / CCUG 34227 / NCIMB 8303 / VKM B-1760 / Hildenborough) (Desulfovibrio vulgaris), this protein is Ketol-acid reductoisomerase (NADP(+)).